The following is a 1118-amino-acid chain: Cytospin-A (1118 aa).

Disordered regions lie at residues 1 to 50 (MKKA…AALS), 75 to 175 (KKSN…DNQI), 294 to 324 (SLSPEITPGNQSDGGGTLTSSVEGSAPGSVE), and 359 to 391 (SSDDALDAPSSSESEGVPSIERSRKGSSGNASE). Composition is skewed to low complexity over residues 34-48 (APTGGKPVKPGAAAA), 80-90 (SSAAPSAPAPA), and 99-113 (KSSTGTSSSAKRSTS). The segment covering 120 to 131 (SSTRERLRERTR) has biased composition (basic and acidic residues). Residues 133 to 145 (NQSKKLPSVSQGA) show a composition bias toward polar residues. Residues 158-171 (TATEGDIRMSKSKS) are compositionally biased toward basic and acidic residues. A coiled-coil region spans residues 168–281 (KSKSDNQISD…LNALGFSLEQ (114 aa)). Residues 294–304 (SLSPEITPGNQ) show a composition bias toward polar residues. Low complexity predominate over residues 359 to 373 (SSDDALDAPSSSESE). Phosphoserine is present on residues S385, S386, and S390. Coiled-coil stretches lie at residues 395–450 (ACLT…MESL) and 488–808 (RYME…RGRV). 3 positions are modified to phosphoserine: S869, S882, and S888. Residues 916-999 (EHLLRTSSTS…STRSRIREER (84 aa)) are disordered. Residues 947 to 957 (RSSEEMKRDIS) show a composition bias toward basic and acidic residues. Residues 972–992 (TTSPQLSLSSSPTASVTPSTR) are compositionally biased toward low complexity. The region spanning 1012–1117 (GSKRNALLKW…YVTAIYKYFE (106 aa)) is the Calponin-homology (CH) domain.

It belongs to the cytospin-A family. As to quaternary structure, may interact with both microtubules and actin cytoskeleton.

The protein resides in the cytoplasm. The protein localises to the cytoskeleton. It is found in the spindle. Its subcellular location is the cell junction. It localises to the gap junction. In terms of biological role, involved in cytokinesis and spindle organization. May play a role in actin cytoskeleton organization and microtubule stabilization and hence required for proper cell adhesion and migration. The chain is Cytospin-A (Specc1l) from Rattus norvegicus (Rat).